We begin with the raw amino-acid sequence, 150 residues long: CCAAT/enhancer-binding protein gamma (150 aa).

Lysine 3 participates in a covalent cross-link: Glycyl lysine isopeptide (Lys-Gly) (interchain with G-Cter in SUMO2). The segment at 27 to 94 (GLQQVPQLVP…QKAQDTLQRV (68 aa)) is disordered. The span at 28 to 37 (LQQVPQLVPA) shows a compositional bias: low complexity. Residues 56–72 (SPMDRNSDEYRQRRERN) show a composition bias toward basic and acidic residues. The bZIP domain occupies 62-125 (SDEYRQRRER…SVLKDLFLEH (64 aa)). The segment at 66–93 (RQRRERNNMAVKKSRLKSKQKAQDTLQR) is basic motif. Residues 97–118 (LKEENERLEAKIKLLTKELSVL) form a leucine-zipper region.

This sequence belongs to the bZIP family. C/EBP subfamily. In terms of assembly, binds DNA as a dimer and can form stable heterodimers with CEBPA and CEBPB. Interacts with ZNF638; this interaction increases transcriptional activation.

It is found in the nucleus. Functionally, transcription factor that binds to the promoter and the enhancer regions of target genes. Binds to the enhancer element PRE-I (positive regulatory element-I) of the IL-4 gene. Binds to the promoter and the enhancer of the immunoglobulin heavy chain. Binds to GPE1, a cis-acting element in the G-CSF gene promoter. The polypeptide is CCAAT/enhancer-binding protein gamma (CEBPG) (Homo sapiens (Human)).